The primary structure comprises 149 residues: Large ribosomal subunit protein bL9 (149 aa).

The protein belongs to the bacterial ribosomal protein bL9 family.

Binds to the 23S rRNA. The protein is Large ribosomal subunit protein bL9 of Leptospira borgpetersenii serovar Hardjo-bovis (strain JB197).